The following is a 190-amino-acid chain: Vexin (190 aa).

Positions 88-156 are disordered; the sequence is AEKKASRFSR…DEATLPLTAH (69 aa). Residues 117 to 133 are compositionally biased toward polar residues; the sequence is TDKQNAPTVPASPSSYE. Basic and acidic residues predominate over residues 136 to 149; the sequence is GCREQRPENPKDEA.

Belongs to the vexin family. Expressed in differentiating progenitors in the developing central nervous system (CNS).

Its subcellular location is the cell membrane. The protein resides in the nucleus. Required for neurogenesis in the neural plate and retina. Cooperates with cell cycle inhibitor cdknx/p27(xic1) to enhance neurogenesis and increase the levels of the neuronal determination factor neurog2/X-ngngr-1. In Xenopus laevis (African clawed frog), this protein is Vexin.